Here is a 186-residue protein sequence, read N- to C-terminus: Lipid A palmitoyltransferase PagP (186 aa).

Residues 1–25 (MNVSKYVAIFFFVFIQLISVGKVFA) form the signal peptide. Catalysis depends on residues H58, D101, and S102.

The protein belongs to the lipid A palmitoyltransferase family. As to quaternary structure, homodimer.

The protein localises to the cell outer membrane. It carries out the reaction lipid A (E. coli) + a 1-hexadecanoyl-2-acyl-sn-glycero-3-phosphocholine = hepta-acyl lipid A (E. coli) + a 2-acyl-sn-glycero-3-phosphocholine. The enzyme catalyses lipid IIA + a 1-hexadecanoyl-2-acyl-sn-glycero-3-phosphocholine = lipid IIB + a 2-acyl-sn-glycero-3-phosphocholine. The catalysed reaction is lipid IVA (E. coli) + a 1-hexadecanoyl-2-acyl-sn-glycero-3-phosphocholine = lipid IVB (E. coli) + a 2-acyl-sn-glycero-3-phosphocholine. Its function is as follows. Transfers a palmitate residue from the sn-1 position of a phospholipid to the N-linked hydroxymyristate on the proximal unit of lipid A or its precursors. The polypeptide is Lipid A palmitoyltransferase PagP (Escherichia coli O6:H1 (strain CFT073 / ATCC 700928 / UPEC)).